A 714-amino-acid chain; its full sequence is Fatty acid oxidation complex subunit alpha (714 aa).

Residues 1 to 190 (MEMTSAFTLN…KLGLVDDVVP (190 aa)) are enoyl-CoA hydratase. The segment at 306–714 (APLNSVGILG…FWKTTATDLQ (409 aa)) is 3-hydroxyacyl-CoA dehydrogenase.

In the N-terminal section; belongs to the enoyl-CoA hydratase/isomerase family. This sequence in the central section; belongs to the 3-hydroxyacyl-CoA dehydrogenase family. Heterotetramer of two alpha chains (FadJ) and two beta chains (FadI).

Its subcellular location is the cytoplasm. The enzyme catalyses a (3S)-3-hydroxyacyl-CoA = a (2E)-enoyl-CoA + H2O. It carries out the reaction a 4-saturated-(3S)-3-hydroxyacyl-CoA = a (3E)-enoyl-CoA + H2O. The catalysed reaction is a (3S)-3-hydroxyacyl-CoA + NAD(+) = a 3-oxoacyl-CoA + NADH + H(+). It catalyses the reaction (3S)-3-hydroxybutanoyl-CoA = (3R)-3-hydroxybutanoyl-CoA. Its pathway is lipid metabolism; fatty acid beta-oxidation. In terms of biological role, catalyzes the formation of a hydroxyacyl-CoA by addition of water on enoyl-CoA. Also exhibits 3-hydroxyacyl-CoA epimerase and 3-hydroxyacyl-CoA dehydrogenase activities. The protein is Fatty acid oxidation complex subunit alpha of Escherichia coli O8 (strain IAI1).